The sequence spans 211 residues: Peptidyl-prolyl cis-trans isomerase FKBP14 (211 aa).

An N-terminal signal peptide occupies residues M1–G19. Residues C38 and C96 are joined by a disulfide bond. One can recognise a PPIase FKBP-type domain in the interval G45–R135. An EF-hand 1 domain is found at R135–K170. D148, N150, D152, R154, and E159 together coordinate Ca(2+). An N-linked (GlcNAc...) asparagine glycan is attached at N176. The EF-hand 2 domain occupies H179 to L211. Ca(2+) contacts are provided by D192, D194, D196, and E203. Positions H208–L211 match the Prevents secretion from ER motif.

As to quaternary structure, monomer. Homodimer. Interacts with type III, type IV and type X collagens.

It localises to the endoplasmic reticulum lumen. The catalysed reaction is [protein]-peptidylproline (omega=180) = [protein]-peptidylproline (omega=0). Its activity is regulated as follows. Inhibited by tacrolimus/FK506. Its function is as follows. PPIase which accelerates the folding of proteins during protein synthesis. Has a preference for substrates containing 4-hydroxylproline modifications, including type III collagen. May also target type VI and type X collagens. The sequence is that of Peptidyl-prolyl cis-trans isomerase FKBP14 (Fkbp14) from Mus musculus (Mouse).